The primary structure comprises 182 residues: Large ribosomal subunit protein uL16 (182 aa).

It belongs to the universal ribosomal protein uL16 family.

This chain is Large ribosomal subunit protein uL16, found in Pyrobaculum neutrophilum (strain DSM 2338 / JCM 9278 / NBRC 100436 / V24Sta) (Thermoproteus neutrophilus).